The following is a 133-amino-acid chain: Large-conductance mechanosensitive channel (133 aa).

The next 2 membrane-spanning stretches (helical) occupy residues 17 to 37 and 73 to 93; these read AFIL…GGAF and IGSF…LYLA.

Belongs to the MscL family. In terms of assembly, homopentamer.

The protein localises to the cell inner membrane. Functionally, channel that opens in response to stretch forces in the membrane lipid bilayer. May participate in the regulation of osmotic pressure changes within the cell. In Synechococcus elongatus (strain ATCC 33912 / PCC 7942 / FACHB-805) (Anacystis nidulans R2), this protein is Large-conductance mechanosensitive channel.